The sequence spans 312 residues: Small ribosomal subunit protein RACK1 (312 aa).

WD repeat units follow at residues 9–42 (GHRGWVTSLACPQQAGSYIKVVSTSRDGTAISWK), 63–93 (GHTGFVSCVSLAHATDYALTASWDRSIRMWD), 105–135 (KHTKDVLAVAFSPDDRLIVSAGRDNVIRVWN), 148–180 (GHEDWVSSICFSPSLEHPIVVSGSWDNTIKVWN), 192–222 (GHSNYVSTVTVSPDGSLCASGGKDGAALLWD), 233–262 (NVESPINQIAFSPNRFWMCVATERSLSVYD), and 279–307 (PSECISIAWSADGNTLYSGHKDNLIRVWS).

It belongs to the WD repeat G protein beta family. Ribosomal protein RACK1 subfamily.

The protein is Small ribosomal subunit protein RACK1 of Leishmania chagasi.